The chain runs to 182 residues: UPF0423 protein BRA0381/BS1330_II0378 (182 aa).

The first 24 residues, 1 to 24 (MKNLFRTAALMVPLSLALAYGAQA), serve as a signal peptide directing secretion.

The protein belongs to the UPF0423 family.

This is UPF0423 protein BRA0381/BS1330_II0378 from Brucella suis biovar 1 (strain 1330).